We begin with the raw amino-acid sequence, 161 residues long: Allophycocyanin alpha chain (161 aa).

The residue at position 71 (asparagine 71) is an N4-methylasparagine. Cysteine 81 contributes to the (2R,3E)-phycocyanobilin binding site.

The protein belongs to the phycobiliprotein family. In terms of assembly, heterodimer of an alpha and a beta chain. Contains one covalently linked phycocyanobilin chromophore.

It is found in the plastid. The protein resides in the chloroplast thylakoid membrane. In terms of biological role, light-harvesting photosynthetic bile pigment-protein from the phycobiliprotein complex. Allophycocyanin has a maximum absorption at approximately 650 nanometers. This chain is Allophycocyanin alpha chain (apcA), found in Galdieria sulphuraria (Red alga).